Reading from the N-terminus, the 353-residue chain is UDP-3-O-acylglucosamine N-acyltransferase (353 aa).

The active-site Proton acceptor is the His242.

This sequence belongs to the transferase hexapeptide repeat family. LpxD subfamily. In terms of assembly, homotrimer.

It catalyses the reaction a UDP-3-O-[(3R)-3-hydroxyacyl]-alpha-D-glucosamine + a (3R)-hydroxyacyl-[ACP] = a UDP-2-N,3-O-bis[(3R)-3-hydroxyacyl]-alpha-D-glucosamine + holo-[ACP] + H(+). It functions in the pathway bacterial outer membrane biogenesis; LPS lipid A biosynthesis. In terms of biological role, catalyzes the N-acylation of UDP-3-O-acylglucosamine using 3-hydroxyacyl-ACP as the acyl donor. Is involved in the biosynthesis of lipid A, a phosphorylated glycolipid that anchors the lipopolysaccharide to the outer membrane of the cell. The chain is UDP-3-O-acylglucosamine N-acyltransferase from Pseudomonas paraeruginosa (strain DSM 24068 / PA7) (Pseudomonas aeruginosa (strain PA7)).